A 430-amino-acid polypeptide reads, in one-letter code: Adenylosuccinate synthetase (430 aa).

Residues 12–18 and 40–42 contribute to the GTP site; these read GDEGKGK and GHT. Residue D13 is the Proton acceptor of the active site. Residues D13 and G40 each contribute to the Mg(2+) site. Residues 13–16, 38–41, T130, R144, Q224, T239, and R303 each bind IMP; these read DEGK and NAGH. The active-site Proton donor is the H41. 299 to 305 provides a ligand contact to substrate; the sequence is VVTGRKR. Residues R305, 331 to 333, and 413 to 415 each bind GTP; these read KLD and STS.

Belongs to the adenylosuccinate synthetase family. In terms of assembly, homodimer. Mg(2+) is required as a cofactor.

The protein localises to the cytoplasm. It carries out the reaction IMP + L-aspartate + GTP = N(6)-(1,2-dicarboxyethyl)-AMP + GDP + phosphate + 2 H(+). The protein operates within purine metabolism; AMP biosynthesis via de novo pathway; AMP from IMP: step 1/2. In terms of biological role, plays an important role in the de novo pathway of purine nucleotide biosynthesis. Catalyzes the first committed step in the biosynthesis of AMP from IMP. The sequence is that of Adenylosuccinate synthetase from Methylobacterium sp. (strain 4-46).